The primary structure comprises 81 residues: uncharacterized protein (81 aa).

This is an uncharacterized protein from Homo sapiens (Human).